We begin with the raw amino-acid sequence, 250 residues long: MADS-box protein J2 (250 aa).

The region spanning 1 to 61 (MGRGRVELKR…GKLYEFSSAS (61 aa)) is the MADS-box domain. Residues 87-177 (TQMNYNEYVR…KNKLEESAAR (91 aa)) form the K-box domain.

It localises to the nucleus. In terms of biological role, MADS-box transcription factor that acts redundantly with EJ2 to control meristem maturation and inflorescence architecture. This chain is MADS-box protein J2, found in Solanum lycopersicum (Tomato).